The chain runs to 394 residues: 1-deoxy-D-xylulose 5-phosphate reductoisomerase (394 aa).

Positions 12, 13, 14, 15, 39, 40, and 126 each coordinate NADPH. 1-deoxy-D-xylulose 5-phosphate is bound at residue Lys127. Glu128 contributes to the NADPH binding site. Asp152 lines the Mn(2+) pocket. 1-deoxy-D-xylulose 5-phosphate contacts are provided by Ser153, Glu154, Ser183, and His206. Glu154 is a Mn(2+) binding site. An NADPH-binding site is contributed by Gly212. Residues Ser219, Asn224, Lys225, and Glu228 each coordinate 1-deoxy-D-xylulose 5-phosphate. Glu228 lines the Mn(2+) pocket.

It belongs to the DXR family. Mg(2+) is required as a cofactor. It depends on Mn(2+) as a cofactor.

The catalysed reaction is 2-C-methyl-D-erythritol 4-phosphate + NADP(+) = 1-deoxy-D-xylulose 5-phosphate + NADPH + H(+). It functions in the pathway isoprenoid biosynthesis; isopentenyl diphosphate biosynthesis via DXP pathway; isopentenyl diphosphate from 1-deoxy-D-xylulose 5-phosphate: step 1/6. Functionally, catalyzes the NADPH-dependent rearrangement and reduction of 1-deoxy-D-xylulose-5-phosphate (DXP) to 2-C-methyl-D-erythritol 4-phosphate (MEP). This Neisseria gonorrhoeae (strain ATCC 700825 / FA 1090) protein is 1-deoxy-D-xylulose 5-phosphate reductoisomerase.